A 209-amino-acid polypeptide reads, in one-letter code: Peptide methionine sulfoxide reductase MsrA (209 aa).

Residue C51 is part of the active site.

Belongs to the MsrA Met sulfoxide reductase family.

It carries out the reaction L-methionyl-[protein] + [thioredoxin]-disulfide + H2O = L-methionyl-(S)-S-oxide-[protein] + [thioredoxin]-dithiol. The enzyme catalyses [thioredoxin]-disulfide + L-methionine + H2O = L-methionine (S)-S-oxide + [thioredoxin]-dithiol. In terms of biological role, has an important function as a repair enzyme for proteins that have been inactivated by oxidation. Catalyzes the reversible oxidation-reduction of methionine sulfoxide in proteins to methionine. This is Peptide methionine sulfoxide reductase MsrA from Vibrio vulnificus (strain CMCP6).